Here is an 813-residue protein sequence, read N- to C-terminus: Protein mac-1 (813 aa).

Coiled-coil stretches lie at residues 58 to 89 (VREA…VQEI) and 122 to 152 (SDDS…TVLN). 2 disordered regions span residues 97-131 (TRKR…ERAA) and 152-193 (NLYT…GAVS). The segment covering 158–172 (SAPSTPVSTPKNQAT) has biased composition (polar residues). A compositionally biased stretch (low complexity) spans 175–191 (PPGASAAPPALPRGLGA). Residues 246-253 (GPPGCGKT) and 575-582 (GPPGCGKT) contribute to the ATP site.

It belongs to the AAA ATPase family. Found in a complex composed of ced-3, ced-4 and mac-1 or of ced-9, ced-4 and mac-1. Within the complex, interacts with ced-4.

Functionally, probably together with ced-9, plays a modest role in preventing ced-4 and caspase ced-3-mediated apoptosis. In Caenorhabditis elegans, this protein is Protein mac-1.